The sequence spans 455 residues: MASTTGALILAAGKGTRMHSDKPKVLQTILGEPMLRFVMDALAPVFGDRVWTVVGHRADMIYAAFAGEDARFVVQEQQLGTGHALQMAWESLRAAGLDRVVVVNGDTPLLATETIDFFLKESAEADIAFMTLTLPDPGAYGRVVRHNGHVAAIVEAKDYDEALYGPEPSEINTGIYALRLDAVESLLPRLTNANRSGEYYITDLVGLAVAGRMNVLGIQCGEDPNLLGVNNPAELIRSEALLRTRLVIGHIEGGVLIHAPETVRISPRATIEPGAEIYGPCEIYGTSRIARGAVVHSHCWLRNAEVESGSEVKSFSHLEGATVGKGCSVGPFARLRPGAVLDEEARVGNFVEMKKARLHKGAKAGHLTYLGDADVGAGANIGAGTITCNYDGKNKHRTVIGAGAFIGSNTALVAPVTVGDGSLVGAGSVITKDVPEASLAIARGRQTNLPRKPKA.

The segment at 1–232 is pyrophosphorylase; sequence MASTTGALIL…DPNLLGVNNP (232 aa). Residues 10-13, Lys24, Gln75, and 80-81 contribute to the UDP-N-acetyl-alpha-D-glucosamine site; these read LAAG and GT. A Mg(2+)-binding site is contributed by Asp106. Residues Gly141, Glu155, Asn172, and Asn230 each contribute to the UDP-N-acetyl-alpha-D-glucosamine site. Asn230 is a binding site for Mg(2+). A linker region spans residues 233 to 253; sequence AELIRSEALLRTRLVIGHIEG. An N-acetyltransferase region spans residues 254–455; that stretch reads GVLIHAPETV…QTNLPRKPKA (202 aa). Residues Arg336 and Lys354 each coordinate UDP-N-acetyl-alpha-D-glucosamine. His366 (proton acceptor) is an active-site residue. Residues Tyr369 and Asn380 each contribute to the UDP-N-acetyl-alpha-D-glucosamine site. Residues Ala383, 389–390, Ser408, Ala426, and Arg443 contribute to the acetyl-CoA site; that span reads NY.

This sequence in the N-terminal section; belongs to the N-acetylglucosamine-1-phosphate uridyltransferase family. It in the C-terminal section; belongs to the transferase hexapeptide repeat family. In terms of assembly, homotrimer. Mg(2+) serves as cofactor.

It is found in the cytoplasm. The enzyme catalyses alpha-D-glucosamine 1-phosphate + acetyl-CoA = N-acetyl-alpha-D-glucosamine 1-phosphate + CoA + H(+). It catalyses the reaction N-acetyl-alpha-D-glucosamine 1-phosphate + UTP + H(+) = UDP-N-acetyl-alpha-D-glucosamine + diphosphate. It participates in nucleotide-sugar biosynthesis; UDP-N-acetyl-alpha-D-glucosamine biosynthesis; N-acetyl-alpha-D-glucosamine 1-phosphate from alpha-D-glucosamine 6-phosphate (route II): step 2/2. It functions in the pathway nucleotide-sugar biosynthesis; UDP-N-acetyl-alpha-D-glucosamine biosynthesis; UDP-N-acetyl-alpha-D-glucosamine from N-acetyl-alpha-D-glucosamine 1-phosphate: step 1/1. Its pathway is bacterial outer membrane biogenesis; LPS lipid A biosynthesis. Functionally, catalyzes the last two sequential reactions in the de novo biosynthetic pathway for UDP-N-acetylglucosamine (UDP-GlcNAc). The C-terminal domain catalyzes the transfer of acetyl group from acetyl coenzyme A to glucosamine-1-phosphate (GlcN-1-P) to produce N-acetylglucosamine-1-phosphate (GlcNAc-1-P), which is converted into UDP-GlcNAc by the transfer of uridine 5-monophosphate (from uridine 5-triphosphate), a reaction catalyzed by the N-terminal domain. The sequence is that of Bifunctional protein GlmU from Nitratidesulfovibrio vulgaris (strain DP4) (Desulfovibrio vulgaris).